The primary structure comprises 332 residues: Tetraacyldisaccharide 4'-kinase (332 aa).

53-60 (SVGGNGKT) lines the ATP pocket.

This sequence belongs to the LpxK family.

The enzyme catalyses a lipid A disaccharide + ATP = a lipid IVA + ADP + H(+). The protein operates within glycolipid biosynthesis; lipid IV(A) biosynthesis; lipid IV(A) from (3R)-3-hydroxytetradecanoyl-[acyl-carrier-protein] and UDP-N-acetyl-alpha-D-glucosamine: step 6/6. Functionally, transfers the gamma-phosphate of ATP to the 4'-position of a tetraacyldisaccharide 1-phosphate intermediate (termed DS-1-P) to form tetraacyldisaccharide 1,4'-bis-phosphate (lipid IVA). The sequence is that of Tetraacyldisaccharide 4'-kinase from Haemophilus influenzae (strain 86-028NP).